A 68-amino-acid polypeptide reads, in one-letter code: uncharacterized protein (68 aa).

The next 2 membrane-spanning stretches (helical) occupy residues 1–21 and 28–48; these read MLFI…YFLP and VHFS…LSSV.

The protein localises to the cell membrane. This is an uncharacterized protein from Haemophilus influenzae (strain ATCC 51907 / DSM 11121 / KW20 / Rd).